We begin with the raw amino-acid sequence, 851 residues long: Circadian locomoter output cycles protein kaput (851 aa).

Positions 32-47 (DKAKRVSRNKSEKKRR) match the Nuclear localization signal motif. A bHLH domain is found at 34-84 (AKRVSRNKSEKKRRDQFNVLIKELGSMLPGNARKMDKSTVLQKSIDFLRKH). Phosphoserine is present on residues Ser38 and Ser42. Residue Lys67 forms a Glycyl lysine isopeptide (Lys-Gly) (interchain with G-Cter in SUMO1) linkage. PAS domains follow at residues 107 to 177 (NEEF…LLES) and 262 to 332 (FIKE…MQYG). The 44-residue stretch at 336–379 (SCYYRFLTKGQQWIWLQTHYYITYHQWNSRPEFIVCTHTVVSYA) folds into the PAC domain. Ser408 is subject to Phosphoserine. Residues 420–508 (ALERFDTSPT…MSQPSTLQLQ (89 aa)) form a disordered region. Ser427 is subject to Phosphoserine; by GSK3-beta. Over residues 447–468 (DHSSTPTKMTVDTSTPPRQSLS) the composition is skewed to polar residues. Residues Thr451 and Thr461 each carry the phosphothreonine; by CDK5 modification. Over residues 476 to 490 (RRSSLSSQSLSSQSL) the composition is skewed to low complexity. Positions 495–508 (AQPTMSQPSTLQLQ) are enriched in polar residues. Residues 516–566 (FQFSAQLGAMQHLKDQLEQRTRMIEANIHRQQEELRKIQEQLQIVHGQGLQ) are implicated in the circadian rhythmicity. Disordered regions lie at residues 627 to 655 (QSLQ…ASQS) and 817 to 851 (TFTQ…AQPQ). A compositionally biased stretch (low complexity) spans 817–833 (TFTQSHHQQHQSQQQQQ). A Glycyl lysine isopeptide (Lys-Gly) (interchain with G-Cter in SUMO1) cross-link involves residue Lys847.

In terms of assembly, component of the circadian clock oscillator which includes the CRY proteins, CLOCK or NPAS2, BMAL1 or BMAL2, CSNK1D and/or CSNK1E, TIMELESS and the PER proteins. Forms a heterodimer with BMAL1. The CLOCK-BMAL1 heterodimer is required for E-box-dependent transactivation, for CLOCK nuclear translocation and degradation, and for phosphorylation of both CLOCK and BMAL1. Interaction with PER and CRY proteins requires translocation to the nucleus. Interaction of the CLOCK-BMAL1 heterodimer with PER or CRY inhibits transcription activation. In terms of processing, ubiquitinated, leading to its proteasomal degradation. Post-translationally, O-glycosylated; contains O-GlcNAc. O-glycosylation by OGT prevents protein degradation by inhibiting ubiquitination. It also stabilizes the CLOCK-BMAL1 heterodimer thereby increasing CLOCK-BMAL1-mediated transcriptional activation of PER1/2/3 and CRY1/2. Phosphorylation is dependent on the CLOCK-BMAL1 heterodimer formation. Phosphorylation enhances the transcriptional activity, alters the subcellular localization and decreases the stability of the heterodimer by promoting its degradation. In terms of processing, sumoylation enhances its transcriptional activity and interaction with ESR1, resulting in up-regulation of ESR1 activity. Estrogen stimulates sumoylation. Desumoylation by SENP1 negatively regulates its transcriptional activity. Post-translationally, undergoes lysosome-mediated degradation in a time-dependent manner in the liver.

The protein localises to the cytoplasm. Its subcellular location is the nucleus. It localises to the cytosol. Transcriptional activator which forms a core component of the circadian clock. The circadian clock, an internal time-keeping system, regulates various physiological processes through the generation of approximately 24 hour circadian rhythms in gene expression, which are translated into rhythms in metabolism and behavior. It is derived from the Latin roots 'circa' (about) and 'diem' (day) and acts as an important regulator of a wide array of physiological functions including metabolism, sleep, body temperature, blood pressure, endocrine, immune, cardiovascular, and renal function. Consists of two major components: the central clock, residing in the suprachiasmatic nucleus (SCN) of the brain, and the peripheral clocks that are present in nearly every tissue and organ system. Both the central and peripheral clocks can be reset by environmental cues, also known as Zeitgebers (German for 'timegivers'). The predominant Zeitgeber for the central clock is light, which is sensed by retina and signals directly to the SCN. The central clock entrains the peripheral clocks through neuronal and hormonal signals, body temperature and feeding-related cues, aligning all clocks with the external light/dark cycle. Circadian rhythms allow an organism to achieve temporal homeostasis with its environment at the molecular level by regulating gene expression to create a peak of protein expression once every 24 hours to control when a particular physiological process is most active with respect to the solar day. Transcription and translation of core clock components (CLOCK, NPAS2, BMAL1, BMAL2, PER1, PER2, PER3, CRY1 and CRY2) plays a critical role in rhythm generation, whereas delays imposed by post-translational modifications (PTMs) are important for determining the period (tau) of the rhythms (tau refers to the period of a rhythm and is the length, in time, of one complete cycle). A diurnal rhythm is synchronized with the day/night cycle, while the ultradian and infradian rhythms have a period shorter and longer than 24 hours, respectively. Disruptions in the circadian rhythms contribute to the pathology of cardiovascular diseases, cancer, metabolic syndromes and aging. A transcription/translation feedback loop (TTFL) forms the core of the molecular circadian clock mechanism. Transcription factors, CLOCK or NPAS2 and BMAL1 or BMAL2, form the positive limb of the feedback loop, act in the form of a heterodimer and activate the transcription of core clock genes and clock-controlled genes (involved in key metabolic processes), harboring E-box elements (5'-CACGTG-3') within their promoters. The core clock genes: PER1/2/3 and CRY1/2 which are transcriptional repressors form the negative limb of the feedback loop and interact with the CLOCK|NPAS2-BMAL1|BMAL2 heterodimer inhibiting its activity and thereby negatively regulating their own expression. This heterodimer also activates nuclear receptors NR1D1/2 and RORA/B/G, which form a second feedback loop and which activate and repress BMAL1 transcription, respectively. The preferred binding motif for the CLOCK-BMAL1 heterodimer is 5'-CACGTGA-3', which contains a flanking adenine nucleotide at the 3-prime end of the canonical 6-nucleotide E-box sequence. CLOCK specifically binds to the half-site 5'-CAC-3', while BMAL1 binds to the half-site 5'-GTGA-3'. The polypeptide is Circadian locomoter output cycles protein kaput (CLOCK) (Tyto alba (Barn owl)).